Consider the following 133-residue polypeptide: Sigma factor-binding protein Crl (133 aa).

An essential for activity region spans residues 99 to 122; it reads TLDDFYVKLTKFVKEDCQLDLQAS.

The protein belongs to the Crl family.

The protein resides in the cytoplasm. In terms of biological role, binds to the sigma-S subunit of RNA polymerase, activating expression of sigma-S-regulated genes. Stimulates RNA polymerase holoenzyme formation and may bind to several other sigma factors, such as sigma-70 and sigma-32. This Photobacterium profundum (strain SS9) protein is Sigma factor-binding protein Crl.